A 653-amino-acid polypeptide reads, in one-letter code: Chaperone protein DnaK (653 aa).

Residue Thr-200 is modified to Phosphothreonine; by autocatalysis. Positions 612 to 653 (QGAAGAAGAAGGAGAAAGAEAAGASQQADDVVDAEFKEVKKD) are disordered. Residues 627–639 (AAGAEAAGASQQA) are compositionally biased toward low complexity.

Belongs to the heat shock protein 70 family.

Acts as a chaperone. The protein is Chaperone protein DnaK of Paraburkholderia phymatum (strain DSM 17167 / CIP 108236 / LMG 21445 / STM815) (Burkholderia phymatum).